The sequence spans 268 residues: Exodeoxyribonuclease III (268 aa).

A Mg(2+)-binding site is contributed by glutamate 34. The active site involves tyrosine 109. The Mg(2+) site is built by aspartate 151, asparagine 153, and aspartate 258. Aspartate 151 (proton donor/acceptor) is an active-site residue.

Belongs to the DNA repair enzymes AP/ExoA family. In terms of assembly, monomer. The cofactor is Mg(2+). Requires Mn(2+) as cofactor.

It carries out the reaction Exonucleolytic cleavage in the 3'- to 5'-direction to yield nucleoside 5'-phosphates.. Its function is as follows. Major apurinic-apyrimidinic endonuclease of E.coli. It removes the damaged DNA at cytosines and guanines by cleaving on the 3'-side of the AP site by a beta-elimination reaction. It exhibits 3'-5'-exonuclease, 3'-phosphomonoesterase, 3'-repair diesterase and ribonuclease H activities. This is Exodeoxyribonuclease III (xthA) from Salmonella typhi.